The sequence spans 190 residues: FMN reductase (NADH) RutF (190 aa).

This sequence belongs to the non-flavoprotein flavin reductase family. RutF subfamily.

The enzyme catalyses FMNH2 + NAD(+) = FMN + NADH + 2 H(+). Its function is as follows. Catalyzes the reduction of FMN to FMNH2 which is used to reduce pyrimidine by RutA via the Rut pathway. In Pantoea ananatis (strain LMG 20103), this protein is FMN reductase (NADH) RutF.